A 374-amino-acid chain; its full sequence is MDSEAEPPQEKKKPNSCPSFLSLPEEILVNCLARIPKSYYPKLSLVCKSFCSLILSMELYVERLYLGTHEDVLHVCLQLPDRRLPSWFSLWTKPDQTLTNDIGKKKKSTRNTLLVPIPSSYSPRVPMFIGEIGSELYAISKHNTPSSVMWVRDKTSIYAWRKAPSMTVARANVFAYVINGKIYVMGGCAADESKYWAEVFDPKTQTWKPLTDPGAELRVSSIIGMAVSEGKIYVKNSYVKDYVYDPEEDKWDVVASSFMIERKCEIENVLYRFSRQSCSWYDTKHKEWRDIKGLATLNRRRRSSILEVAKYGDKVLILWEIFAKPFYQNKSIWCAVIALEKRKIDEIWGKVKWASIVLTVPRSYVFLRCEVKPV.

The F-box domain occupies 17-63 (CPSFLSLPEEILVNCLARIPKSYYPKLSLVCKSFCSLILSMELYVER). Kelch repeat units follow at residues 135–180 (ELYA…VING), 181–227 (KIYV…GMAV), 231–278 (KIYV…RQSC), and 280–308 (WYDT…ILEV).

In Arabidopsis thaliana (Mouse-ear cress), this protein is Putative F-box/kelch-repeat protein At4g39756.